The following is a 199-amino-acid chain: Phosphoserine phosphatase RsbX (199 aa).

In terms of domain architecture, PPM-type phosphatase spans 11 to 198 (QTLVYQLNKE…DDLTYILGQL (188 aa)).

The enzyme catalyses O-phospho-L-serine + H2O = L-serine + phosphate. It carries out the reaction O-phospho-D-serine + H2O = D-serine + phosphate. Negative regulator of sigma-B activity. Dephosphorylates RsbS. Plays a role both in maintaining low sigma-B activity during growth and in reestablishing prestress sigma-B activity after induction. Could have a negative feedback role by indirectly communicating sigma-B protein levels. The sequence is that of Phosphoserine phosphatase RsbX (rsbX) from Bacillus subtilis (strain 168).